We begin with the raw amino-acid sequence, 204 residues long: Transcription factor bHLH120 (204 aa).

Disordered regions lie at residues 1–27 (MNPS…KKEK) and 93–116 (KREI…RSEP). The bHLH domain maps to 26-78 (EKKLLHRNIERQRRQEMAILFASLRSQLPLKYIKGKRAMSDHVNGAVSFIKDT).

As to quaternary structure, homodimer.

The protein resides in the nucleus. This is Transcription factor bHLH120 (BHLH120) from Arabidopsis thaliana (Mouse-ear cress).